A 68-amino-acid polypeptide reads, in one-letter code: DNA-directed RNA polymerase subunit Rpo10 (68 aa).

Residues Cys7, Cys10, Cys44, and Cys45 each coordinate Zn(2+).

Belongs to the archaeal Rpo10/eukaryotic RPB10 RNA polymerase subunit family. In terms of assembly, part of the RNA polymerase complex. The cofactor is Zn(2+).

Its subcellular location is the cytoplasm. It carries out the reaction RNA(n) + a ribonucleoside 5'-triphosphate = RNA(n+1) + diphosphate. Functionally, DNA-dependent RNA polymerase (RNAP) catalyzes the transcription of DNA into RNA using the four ribonucleoside triphosphates as substrates. The chain is DNA-directed RNA polymerase subunit Rpo10 from Methanococcus maripaludis (strain C5 / ATCC BAA-1333).